A 465-amino-acid chain; its full sequence is UDP-N-acetylmuramate--L-alanine ligase (465 aa).

114–120 (GTHGKTT) contacts ATP.

This sequence belongs to the MurCDEF family.

The protein localises to the cytoplasm. It carries out the reaction UDP-N-acetyl-alpha-D-muramate + L-alanine + ATP = UDP-N-acetyl-alpha-D-muramoyl-L-alanine + ADP + phosphate + H(+). It participates in cell wall biogenesis; peptidoglycan biosynthesis. In terms of biological role, cell wall formation. The protein is UDP-N-acetylmuramate--L-alanine ligase of Chlorobium phaeobacteroides (strain BS1).